Here is a 159-residue protein sequence, read N- to C-terminus: NAD(P)H-quinone oxidoreductase subunit J, chloroplastic (159 aa).

This sequence belongs to the complex I 30 kDa subunit family. As to quaternary structure, NDH is composed of at least 16 different subunits, 5 of which are encoded in the nucleus.

It is found in the plastid. It localises to the chloroplast thylakoid membrane. The catalysed reaction is a plastoquinone + NADH + (n+1) H(+)(in) = a plastoquinol + NAD(+) + n H(+)(out). It catalyses the reaction a plastoquinone + NADPH + (n+1) H(+)(in) = a plastoquinol + NADP(+) + n H(+)(out). Functionally, NDH shuttles electrons from NAD(P)H:plastoquinone, via FMN and iron-sulfur (Fe-S) centers, to quinones in the photosynthetic chain and possibly in a chloroplast respiratory chain. The immediate electron acceptor for the enzyme in this species is believed to be plastoquinone. Couples the redox reaction to proton translocation, and thus conserves the redox energy in a proton gradient. The protein is NAD(P)H-quinone oxidoreductase subunit J, chloroplastic of Brachypodium distachyon (Purple false brome).